Here is a 63-residue protein sequence, read N- to C-terminus: Prokaryotic ubiquitin-like protein Pup (63 aa).

The tract at residues 1 to 28 is disordered; it reads MPQEFEQIRSADQPLDSEESAPVAGART. Positions 19 to 57 are ARC ATPase binding; that stretch reads ESAPVAGARTDDTVDALDAVLDDIESVLETNAEEYVGSF. Residue Glu-63 forms an Isoglutamyl lysine isopeptide (Glu-Lys) (interchain with K-? in acceptor proteins) linkage.

It belongs to the prokaryotic ubiquitin-like protein family. As to quaternary structure, strongly interacts with the proteasome-associated ATPase ARC through a hydrophobic interface; the interacting region of Pup lies in its C-terminal half. There is one Pup binding site per ARC hexamer ring.

The protein operates within protein degradation; proteasomal Pup-dependent pathway. Functionally, protein modifier that is covalently attached to lysine residues of substrate proteins, thereby targeting them for proteasomal degradation. The tagging system is termed pupylation. This chain is Prokaryotic ubiquitin-like protein Pup, found in Bifidobacterium dentium (strain ATCC 27534 / DSM 20436 / JCM 1195 / Bd1).